Reading from the N-terminus, the 85-residue chain is Small ribosomal subunit protein uS17 (85 aa).

It belongs to the universal ribosomal protein uS17 family. Part of the 30S ribosomal subunit.

In terms of biological role, one of the primary rRNA binding proteins, it binds specifically to the 5'-end of 16S ribosomal RNA. The sequence is that of Small ribosomal subunit protein uS17 from Acinetobacter baumannii (strain AB307-0294).